A 793-amino-acid polypeptide reads, in one-letter code: DnaJ homolog subfamily C member 10 (793 aa).

Residues 1–32 form the signal peptide; the sequence is MGVWLNKDDFIRDLKRISLCLLILYVVVVVGT. In terms of domain architecture, J spans 35–100; the sequence is NFYSLLGVSK…DLRKKYDKYG (66 aa). A Thioredoxin 1 domain is found at 130-232; it reads EIITLERREF…ESLVAFAMQH (103 aa). Cysteine 158 and cysteine 161 are oxidised to a cystine. 2 trxb regions span residues 235 to 350 and 348 to 463; these read STVT…LPDF and PDFE…PQNF. Thioredoxin domains follow at residues 454 to 553, 557 to 665, and 671 to 776; these read HVTT…IEDL, SVVS…SWGL, and ASID…ALIY. Cysteine 480 and cysteine 483 are joined by a disulfide. The N-linked (GlcNAc...) asparagine glycan is linked to asparagine 530. 2 disulfide bridges follow: cysteine 588–cysteine 591 and cysteine 700–cysteine 703. The Prevents secretion from ER motif lies at 790–793; the sequence is KDEL.

Interacts with HSPA5 (via its J domain). Interacts with EDEM1. Ubiquitous. Particularly abundant in secretory tissues. Ubiquitous in fetal tissues and tumor tissues. Higher expression in fetal tissues than in adult tissues. Expressed in testis, pancreas, fetal thymus and fetal kidney. High expression in heart, liver, kidney, and testis. Low expression in spleen and skeletal muscle.

It localises to the endoplasmic reticulum lumen. Its function is as follows. Endoplasmic reticulum disulfide reductase involved both in the correct folding of proteins and degradation of misfolded proteins. Required for efficient folding of proteins in the endoplasmic reticulum by catalyzing the removal of non-native disulfide bonds formed during the folding of proteins, such as LDLR. Also involved in endoplasmic reticulum-associated degradation (ERAD) by reducing incorrect disulfide bonds in misfolded glycoproteins recognized by EDEM1. Interaction with HSPA5 is required its activity, not for the disulfide reductase activity, but to facilitate the release of DNAJC10 from its substrate. Promotes apoptotic signaling pathway in response to endoplasmic reticulum stress. This Mus musculus (Mouse) protein is DnaJ homolog subfamily C member 10 (Dnajc10).